Reading from the N-terminus, the 28-residue chain is FLAKKVAKTVAKQAAKQGAKYIANKQTE.

E28 carries the post-translational modification Glutamic acid 1-amide.

In terms of tissue distribution, expressed by the venom gland.

The protein resides in the secreted. The polypeptide is Short cationic peptide-1c (Cupiennius salei (American wandering spider)).